The following is a 524-amino-acid chain: Histidine ammonia-lyase (524 aa).

The segment at residues 139-141 (ASG) is a cross-link (5-imidazolinone (Ala-Gly)). The residue at position 140 (Ser140) is a 2,3-didehydroalanine (Ser). The segment at 500–524 (ADTQAPAPAKLPDSGDEDRDTTSRH) is disordered.

Belongs to the PAL/histidase family. Contains an active site 4-methylidene-imidazol-5-one (MIO), which is formed autocatalytically by cyclization and dehydration of residues Ala-Ser-Gly.

Its subcellular location is the cytoplasm. The enzyme catalyses L-histidine = trans-urocanate + NH4(+). It functions in the pathway amino-acid degradation; L-histidine degradation into L-glutamate; N-formimidoyl-L-glutamate from L-histidine: step 1/3. In Deinococcus radiodurans (strain ATCC 13939 / DSM 20539 / JCM 16871 / CCUG 27074 / LMG 4051 / NBRC 15346 / NCIMB 9279 / VKM B-1422 / R1), this protein is Histidine ammonia-lyase (hutH).